The sequence spans 192 residues: Ras-like protein 2 (192 aa).

12–19 provides a ligand contact to GTP; sequence GGGGVGKS. The Effector region motif lies at 34 to 42; that stretch reads YDPTIEDSY. Cysteine 46 carries S-palmitoyl cysteine lipidation. GTP is bound by residues 59–63 and 118–121; these read DTAGQ and NKCD. S-palmitoyl cysteine attachment occurs at residues cysteine 120 and cysteine 147. Cysteine 189 is subject to Cysteine methyl ester. Residue cysteine 189 is the site of S-farnesyl cysteine attachment. A propeptide spans 190–192 (removed in mature form); sequence CLM.

This sequence belongs to the small GTPase superfamily. Ras family. In terms of assembly, interacts with hzg.

It localises to the cell membrane. It catalyses the reaction GTP + H2O = GDP + phosphate + H(+). With respect to regulation, alternates between an inactive form bound to GDP and an active form bound to GTP. Activated by a guanine nucleotide-exchange factor (GEF) and inactivated by a GTPase-activating protein (GAP). May be involved in endocytic processes and/or other transport pathways mediated by vesicle trafficking. May interact functionally with ROP protein. Ras proteins bind GDP/GTP and possess intrinsic GTPase activity. The protein is Ras-like protein 2 (Ras64B) of Drosophila melanogaster (Fruit fly).